A 425-amino-acid chain; its full sequence is Elongation factor 1-alpha (425 aa).

The tr-type G domain occupies K5–T221. Positions G14–S21 are G1. Residue G14–S21 coordinates GTP. S21 contributes to the Mg(2+) binding site. The G2 stretch occupies residues G70–D74. Positions D91–G94 are G3. Residues D91–H95 and N146–D149 each bind GTP. Positions N146 to D149 are G4. The segment at S185–L187 is G5.

This sequence belongs to the TRAFAC class translation factor GTPase superfamily. Classic translation factor GTPase family. EF-Tu/EF-1A subfamily.

The protein localises to the cytoplasm. It catalyses the reaction GTP + H2O = GDP + phosphate + H(+). Functionally, GTP hydrolase that promotes the GTP-dependent binding of aminoacyl-tRNA to the A-site of ribosomes during protein biosynthesis. This Methanoregula boonei (strain DSM 21154 / JCM 14090 / 6A8) protein is Elongation factor 1-alpha.